Here is a 450-residue protein sequence, read N- to C-terminus: Folate synthesis bifunctional protein (450 aa).

Residues 1 to 166 form an HPPK region; it reads MTTWNFVCLG…TFAELAAIYP (166 aa). The Pterin-binding domain maps to 180-441; it reads TQIMGIVNVT…QVEGNRRVLA (262 aa). Positions 182–450 are DHPS; it reads IMGIVNVTDD…AAAAWSGMPV (269 aa). Asn-187 contacts Mg(2+). Residues Thr-227, Asp-267, Asn-287, Asp-358, Lys-395, and 429-431 contribute to the (7,8-dihydropterin-6-yl)methyl diphosphate site; that span reads RVH.

The protein in the C-terminal section; belongs to the DHPS family. This sequence in the N-terminal section; belongs to the HPPK family. It depends on Mg(2+) as a cofactor.

The catalysed reaction is 6-hydroxymethyl-7,8-dihydropterin + ATP = (7,8-dihydropterin-6-yl)methyl diphosphate + AMP + H(+). It catalyses the reaction (7,8-dihydropterin-6-yl)methyl diphosphate + 4-aminobenzoate = 7,8-dihydropteroate + diphosphate. It functions in the pathway cofactor biosynthesis; tetrahydrofolate biosynthesis; 2-amino-4-hydroxy-6-hydroxymethyl-7,8-dihydropteridine diphosphate from 7,8-dihydroneopterin triphosphate: step 4/4. Its pathway is cofactor biosynthesis; tetrahydrofolate biosynthesis; 7,8-dihydrofolate from 2-amino-4-hydroxy-6-hydroxymethyl-7,8-dihydropteridine diphosphate and 4-aminobenzoate: step 1/2. The sequence is that of Folate synthesis bifunctional protein (folKP) from Chlamydia muridarum (strain MoPn / Nigg).